Reading from the N-terminus, the 392-residue chain is CCA-adding enzyme (392 aa).

Residues serine 45 and lysine 48 each contribute to the ATP site. Serine 45 and lysine 48 together coordinate CTP. Mg(2+) contacts are provided by aspartate 55, aspartate 57, and glutamate 106. Residues histidine 129, lysine 148, and tyrosine 157 each coordinate ATP. Histidine 129, lysine 148, and tyrosine 157 together coordinate CTP.

This sequence belongs to the tRNA nucleotidyltransferase/poly(A) polymerase family. Archaeal CCA-adding enzyme subfamily. Homodimer. It depends on Mg(2+) as a cofactor.

It catalyses the reaction a tRNA precursor + 2 CTP + ATP = a tRNA with a 3' CCA end + 3 diphosphate. The enzyme catalyses a tRNA with a 3' CCA end + 2 CTP + ATP = a tRNA with a 3' CCACCA end + 3 diphosphate. In terms of biological role, catalyzes the addition and repair of the essential 3'-terminal CCA sequence in tRNAs without using a nucleic acid template. Adds these three nucleotides in the order of C, C, and A to the tRNA nucleotide-73, using CTP and ATP as substrates and producing inorganic pyrophosphate. tRNA 3'-terminal CCA addition is required both for tRNA processing and repair. Also involved in tRNA surveillance by mediating tandem CCA addition to generate a CCACCA at the 3' terminus of unstable tRNAs. While stable tRNAs receive only 3'-terminal CCA, unstable tRNAs are marked with CCACCA and rapidly degraded. The chain is CCA-adding enzyme from Nanoarchaeum equitans (strain Kin4-M).